A 765-amino-acid polypeptide reads, in one-letter code: Protein transport protein Sec23A (765 aa).

N-acetylthreonine is present on Thr2. Residues Cys61, Cys66, Cys85, and Cys88 each contribute to the Zn(2+) site. Position 308 is a phosphothreonine (Thr308). Residues 632-718 (PEPVLLDSSS…EHGGSQARFL (87 aa)) form a Gelsolin-like repeat.

The protein belongs to the SEC23/SEC24 family. SEC23 subfamily. In terms of assembly, COPII is composed of at least five proteins: the Sec23/24 complex, the Sec13/31 complex and Sar1. Interacts with SEC23IP. Interacts with HTR4. Interacts with SEC16A. Interacts with SLC6A4. Interacts (as part of the Sec23/24 complex) with SEC22B; recruits SEC22B into COPII-coated vesicles and allows the transport of this cargo from the endoplasmic reticulum to the Golgi. Interacts (via Gelsolin-like repeat) with MIA2 and MIA3; specifically involved in the transport of large cargos like the collagen COL7A1. Interacts with DDHD1. Interacts with TMEM39A. Interacts with SACM1L; this interaction is reduced in the absence of TMEM39A. Interacts with kinase FAM20C; transport of FAM20C from the endoplasmic reticulum to the Golgi is likely to be mediated by COPII vesicles. As to expression, high levels in brain and fibroblasts.

It localises to the cytoplasmic vesicle. The protein resides in the COPII-coated vesicle membrane. Its subcellular location is the endoplasmic reticulum membrane. The protein localises to the cytoplasm. It is found in the cytosol. Functionally, component of the coat protein complex II (COPII) which promotes the formation of transport vesicles from the endoplasmic reticulum (ER). The coat has two main functions, the physical deformation of the endoplasmic reticulum membrane into vesicles and the selection of cargo molecules for their transport to the Golgi complex. Required for the translocation of insulin-induced glucose transporter SLC2A4/GLUT4 to the cell membrane. This Mus musculus (Mouse) protein is Protein transport protein Sec23A.